The sequence spans 424 residues: Glutamyl-tRNA reductase (424 aa).

Residues 49–52 (TCNR), Ser-107, 112–114 (EPQ), and Gln-118 contribute to the substrate site. Cys-50 acts as the Nucleophile in catalysis. 187–192 (GAGETI) provides a ligand contact to NADP(+).

This sequence belongs to the glutamyl-tRNA reductase family. In terms of assembly, homodimer.

It catalyses the reaction (S)-4-amino-5-oxopentanoate + tRNA(Glu) + NADP(+) = L-glutamyl-tRNA(Glu) + NADPH + H(+). It functions in the pathway porphyrin-containing compound metabolism; protoporphyrin-IX biosynthesis; 5-aminolevulinate from L-glutamyl-tRNA(Glu): step 1/2. Functionally, catalyzes the NADPH-dependent reduction of glutamyl-tRNA(Glu) to glutamate 1-semialdehyde (GSA). The chain is Glutamyl-tRNA reductase from Pseudomonas fluorescens (strain ATCC BAA-477 / NRRL B-23932 / Pf-5).